The primary structure comprises 157 residues: Glutaredoxin-2, mitochondrial (157 aa).

The N-terminal 19 residues, 1 to 19 (MSWYRAASVGRRLVASGRI), are a transit peptide targeting the mitochondrion. Residues 50-150 (VNQIQETISN…PLVHQCYLNK (101 aa)) form the Glutaredoxin domain. Cysteine 61 lines the [2Fe-2S] cluster pocket. Position 67 (lysine 67) interacts with glutathione. Position 70 is an S-glutathionyl cysteine; alternate (cysteine 70). A disulfide bridge links cysteine 70 with cysteine 73. The glutathione site is built by glutamine 102 and valine 114. Cysteine 146 contributes to the [2Fe-2S] cluster binding site.

The protein belongs to the glutaredoxin family. In terms of assembly, monomer; active form. Homodimer; inactive form. The homodimer is probably linked by 1 2Fe-2S cluster.

Its subcellular location is the mitochondrion. The protein localises to the nucleus. With respect to regulation, the 2Fe-2S present in the homodimer leads to inactivation of the enzyme. The 2Fe-2S may serve as a redox sensor: the presence of one-electron oxidants or reductants leading to the loss of the 2Fe-2S cluster, subsequent monomerization and activation of the enzyme. Functionally, glutathione-dependent oxidoreductase that facilitates the maintenance of mitochondrial redox homeostasis upon induction of apoptosis by oxidative stress. Involved in response to hydrogen peroxide and regulation of apoptosis caused by oxidative stress. Acts as a very efficient catalyst of monothiol reactions because of its high affinity for protein glutathione-mixed disulfides. Can receive electrons not only from glutathione (GSH), but also from thioredoxin reductase supporting both monothiol and dithiol reactions. Efficiently catalyzes both glutathionylation and deglutathionylation of mitochondrial complex I, which in turn regulates the superoxide production by the complex. Overexpression decreases the susceptibility to apoptosis and prevents loss of cardiolipin and cytochrome c release. The sequence is that of Glutaredoxin-2, mitochondrial (Glrx2) from Rattus norvegicus (Rat).